The sequence spans 427 residues: Putative dipeptidase MCYG_02918 (427 aa).

The first 29 residues, 1 to 29 (MAPERRSRLSDAGILVSLLALTSLVPVQA), serve as a signal peptide directing secretion. Zn(2+) contacts are provided by His55, Asp57, and Glu167. Cysteines 106 and 196 form a disulfide. His194 provides a ligand contact to substrate. Zn(2+) contacts are provided by His238 and His259. Substrate-binding residues include Arg270 and Asp330. Asn402 carries an N-linked (GlcNAc...) asparagine glycan.

The protein belongs to the metallo-dependent hydrolases superfamily. Peptidase M19 family. Zn(2+) serves as cofactor.

The catalysed reaction is an L-aminoacyl-L-amino acid + H2O = 2 an L-alpha-amino acid. Functionally, hydrolyzes a wide range of dipeptides. In Arthroderma otae (strain ATCC MYA-4605 / CBS 113480) (Microsporum canis), this protein is Putative dipeptidase MCYG_02918.